We begin with the raw amino-acid sequence, 122 residues long: Large ribosomal subunit protein uL14 (122 aa).

The protein belongs to the universal ribosomal protein uL14 family. As to quaternary structure, part of the 50S ribosomal subunit. Forms a cluster with proteins L3 and L19. In the 70S ribosome, L14 and L19 interact and together make contacts with the 16S rRNA in bridges B5 and B8.

Its function is as follows. Binds to 23S rRNA. Forms part of two intersubunit bridges in the 70S ribosome. This is Large ribosomal subunit protein uL14 from Shewanella woodyi (strain ATCC 51908 / MS32).